The primary structure comprises 599 residues: Tryptophan 2-C-methyltransferase (599 aa).

One can recognise a B12-binding domain in the interval lysine 4 to aspartate 149. The segment at arginine 167–proline 197 is disordered. A compositionally biased stretch (low complexity) spans valine 168–proline 181. Positions tyrosine 239–aspartate 492 constitute a Radical SAM core domain. 3 residues coordinate [4Fe-4S] cluster: cysteine 253, cysteine 257, and cysteine 260.

[4Fe-4S] cluster serves as cofactor. It depends on cob(II)alamin as a cofactor.

It catalyses the reaction L-tryptophan + S-adenosyl-L-methionine = 2-methyl-L-tryptophan + S-adenosyl-L-homocysteine + H(+). In terms of biological role, involved in the biosynthetic pathway of the antibiotic thiostrepton A. First, TsrM catalyzes the transfer of a methyl group from S-adenosyl methionine (SAM) to cobalamin, leading to the formation of methylcobalamin (CH3-cobalamin) and S-adenosyl-L-homocysteine (SAH). Then the methyl group is transferred to the C2 position of tryptophan (Trp) with the concerted action of the radical SAM [4Fe-4S] center, leading to the production of methyltryptophan. The chain is Tryptophan 2-C-methyltransferase from Streptomyces laurentii.